The sequence spans 476 residues: Ureidoglycolate hydrolase (476 aa).

The first 25 residues, 1–25, serve as a signal peptide directing secretion; that stretch reads MESLKRFLCSIALLLISLLLPSSLA. The Mn(2+) site is built by histidine 138, aspartate 149, glutamate 184, and histidine 254. Substrate is bound by residues 183-184, 254-257, histidine 290, asparagine 340, arginine 353, 423-424, and histidine 448; these read EE, HIEQ, and YH. An involved in dimerization region spans residues 276–391; sequence APASLKVEFE…LSEFKIVNQD (116 aa). Histidine 448 lines the Mn(2+) pocket.

The protein belongs to the peptidase M20 family. In terms of assembly, homodimer. Requires Mn(2+) as cofactor. It depends on Ni(2+) as a cofactor. Co(2+) serves as cofactor.

Its subcellular location is the endoplasmic reticulum. The enzyme catalyses (S)-ureidoglycolate + H2O + 2 H(+) = glyoxylate + 2 NH4(+) + CO2. It participates in nitrogen metabolism; (S)-allantoin degradation; glyoxylate from (S)-ureidoglycolate: step 1/1. In terms of biological role, involved in the catabolism of purine nucleotides. Can use (S)-ureidoglycolate as substrate, but not (R)-ureidoglycolate or allantoate. The sequential activity of AAH, UGLYAH and UAH allows a complete purine breakdown without the intermediate generation of urea. This Arabidopsis thaliana (Mouse-ear cress) protein is Ureidoglycolate hydrolase.